The chain runs to 133 residues: Fluoride-specific ion channel FluC (133 aa).

The next 4 helical transmembrane spans lie at 3–23 (AVVW…GSGL), 41–61 (WGTL…LIWV), 76–96 (IVGL…CLVF), and 103–123 (LIVG…VFLG). Residues Gly81 and Thr84 each coordinate Na(+).

It belongs to the fluoride channel Fluc/FEX (TC 1.A.43) family.

The protein localises to the cell inner membrane. The enzyme catalyses fluoride(in) = fluoride(out). With respect to regulation, na(+) is not transported, but it plays an essential structural role and its presence is essential for fluoride channel function. In terms of biological role, fluoride-specific ion channel. Important for reducing fluoride concentration in the cell, thus reducing its toxicity. In Xylella fastidiosa (strain M23), this protein is Fluoride-specific ion channel FluC.